Consider the following 355-residue polypeptide: Ornithine transcarbamylase, mitochondrial (355 aa).

A mitochondrion-targeting transit peptide spans 1 to 35; the sequence is MLFINLRTLLNNAALRNGHNFVVRNFRCGQPVQDK. An N6-acetyllysine; alternate modification is found at lysine 71. At lysine 71 the chain carries N6-succinyllysine; alternate. Lysine 81 carries the N6-succinyllysine modification. Lysine 89 is subject to N6-acetyllysine; alternate. The residue at position 89 (lysine 89) is an N6-succinyllysine; alternate. Position 91–95 (91–95) interacts with carbamoyl phosphate; that stretch reads STRTR. Serine 134 bears the Phosphoserine mark. Arginine 142 serves as a coordination point for carbamoyl phosphate. Arginine 142 is an L-ornithine binding site. Lysine 145 is modified (N6-acetyllysine; alternate). Lysine 145 is modified (N6-succinyllysine; alternate). A carbamoyl phosphate-binding site is contributed by histidine 169. Asparagine 200 contacts L-ornithine. An N6-acetyllysine; alternate mark is found at lysine 222, lysine 232, and lysine 239. N6-succinyllysine; alternate occurs at positions 222, 232, and 239. N6-acetyllysine is present on lysine 244. An L-ornithine-binding site is contributed by 264–268; it reads DTWIS. 2 positions are modified to N6-succinyllysine: lysine 275 and lysine 290. An N6-acetyllysine; alternate modification is found at lysine 293. Residue lysine 293 is modified to N6-succinyllysine; alternate. 303 to 306 serves as a coordination point for L-ornithine; that stretch reads HCLP. The active site involves cysteine 304. Position 308 is an N6-acetyllysine; alternate (lysine 308). An N6-succinyllysine; alternate modification is found at lysine 308. Arginine 331 provides a ligand contact to carbamoyl phosphate. Arginine 331 contributes to the L-ornithine binding site.

The protein belongs to the aspartate/ornithine carbamoyltransferase superfamily. OTCase family. Homotrimer. Acetylation at Lys-89 negatively regulates ornithine carbamoyltransferase activity in response to nutrient signals.

It localises to the mitochondrion matrix. The enzyme catalyses carbamoyl phosphate + L-ornithine = L-citrulline + phosphate + H(+). It participates in nitrogen metabolism; urea cycle; L-citrulline from L-ornithine and carbamoyl phosphate: step 1/1. Its activity is regulated as follows. Negatively regulated by lysine acetylation. Functionally, catalyzes the second step of the urea cycle, the condensation of carbamoyl phosphate with L-ornithine to form L-citrulline. The urea cycle ensures the detoxification of ammonia by converting it to urea for excretion. This chain is Ornithine transcarbamylase, mitochondrial, found in Ovis aries (Sheep).